Reading from the N-terminus, the 458-residue chain is Putative non-structural protein 2 (458 aa).

The segment covering 1 to 12 (MSDTNEENRDEP) has biased composition (basic and acidic residues). The segment at 1–27 (MSDTNEENRDEPTVVIVGPNDAQTETT) is disordered.

In Micromonas pusilla (Picoplanktonic green alga), this protein is Putative non-structural protein 2 (S8).